A 288-amino-acid chain; its full sequence is UTP--glucose-1-phosphate uridylyltransferase (288 aa).

Belongs to the UDPGP type 2 family.

It carries out the reaction alpha-D-glucose 1-phosphate + UTP + H(+) = UDP-alpha-D-glucose + diphosphate. The protein operates within glycolipid metabolism; diglucosyl-diacylglycerol biosynthesis. Catalyzes the formation of UDP-glucose from glucose-1-phosphate and UTP. This is an intermediate step in the biosynthesis of diglucosyl-diacylglycerol (Glc2-DAG), i.e. the predominant glycolipid found in the S.aureus membrane, which is also used as a membrane anchor for lipoteichoic acid (LTA). This chain is UTP--glucose-1-phosphate uridylyltransferase (gtaB), found in Staphylococcus aureus (strain bovine RF122 / ET3-1).